Consider the following 123-residue polypeptide: Small ribosomal subunit protein uS12 (123 aa).

At Asp89 the chain carries 3-methylthioaspartic acid. The interval 101–123 (SLDTSGVKDRKQGRSKYGAKRPK) is disordered. Basic residues predominate over residues 113 to 123 (GRSKYGAKRPK).

This sequence belongs to the universal ribosomal protein uS12 family. Part of the 30S ribosomal subunit. Contacts proteins S8 and S17. May interact with IF1 in the 30S initiation complex.

With S4 and S5 plays an important role in translational accuracy. In terms of biological role, interacts with and stabilizes bases of the 16S rRNA that are involved in tRNA selection in the A site and with the mRNA backbone. Located at the interface of the 30S and 50S subunits, it traverses the body of the 30S subunit contacting proteins on the other side and probably holding the rRNA structure together. The combined cluster of proteins S8, S12 and S17 appears to hold together the shoulder and platform of the 30S subunit. This Stutzerimonas stutzeri (strain A1501) (Pseudomonas stutzeri) protein is Small ribosomal subunit protein uS12.